We begin with the raw amino-acid sequence, 300 residues long: Ornithine carbamoyltransferase (300 aa).

Residues Ser51–Thr54, Gln78, Arg102, and His129–Gln132 each bind carbamoyl phosphate. Residues Asn160, Asp217, and Ser221 to Met222 each bind L-ornithine. Carbamoyl phosphate contacts are provided by residues Cys257–Leu258 and Arg285.

Belongs to the aspartate/ornithine carbamoyltransferase superfamily. OTCase family.

It localises to the cytoplasm. It carries out the reaction carbamoyl phosphate + L-ornithine = L-citrulline + phosphate + H(+). It functions in the pathway amino-acid biosynthesis; L-arginine biosynthesis; L-arginine from L-ornithine and carbamoyl phosphate: step 1/3. In terms of biological role, reversibly catalyzes the transfer of the carbamoyl group from carbamoyl phosphate (CP) to the N(epsilon) atom of ornithine (ORN) to produce L-citrulline. The sequence is that of Ornithine carbamoyltransferase from Halorhodospira halophila (strain DSM 244 / SL1) (Ectothiorhodospira halophila (strain DSM 244 / SL1)).